The sequence spans 431 residues: Adenylosuccinate lyase (431 aa).

N(6)-(1,2-dicarboxyethyl)-AMP contacts are provided by residues 4-5, 67-69, and 93-94; these read RY, RHD, and TS. Histidine 141 functions as the Proton donor/acceptor in the catalytic mechanism. Glutamine 212 contributes to the N(6)-(1,2-dicarboxyethyl)-AMP binding site. Serine 262 (proton donor/acceptor) is an active-site residue. N(6)-(1,2-dicarboxyethyl)-AMP is bound by residues serine 263, 268-270, asparagine 276, and 307-311; these read KRN and SAERI.

It belongs to the lyase 1 family. Adenylosuccinate lyase subfamily. In terms of assembly, homodimer and homotetramer. Residues from neighboring subunits contribute catalytic and substrate-binding residues to each active site.

The enzyme catalyses N(6)-(1,2-dicarboxyethyl)-AMP = fumarate + AMP. The catalysed reaction is (2S)-2-[5-amino-1-(5-phospho-beta-D-ribosyl)imidazole-4-carboxamido]succinate = 5-amino-1-(5-phospho-beta-D-ribosyl)imidazole-4-carboxamide + fumarate. It functions in the pathway purine metabolism; AMP biosynthesis via de novo pathway; AMP from IMP: step 2/2. It participates in purine metabolism; IMP biosynthesis via de novo pathway; 5-amino-1-(5-phospho-D-ribosyl)imidazole-4-carboxamide from 5-amino-1-(5-phospho-D-ribosyl)imidazole-4-carboxylate: step 2/2. In terms of biological role, catalyzes two reactions in de novo purine nucleotide biosynthesis. Catalyzes the breakdown of 5-aminoimidazole- (N-succinylocarboxamide) ribotide (SAICAR or 2-[5-amino-1-(5-phospho-beta-D-ribosyl)imidazole-4-carboxamido]succinate) to 5-aminoimidazole-4-carboxamide ribotide (AICAR or 5-amino-1-(5-phospho-beta-D-ribosyl)imidazole-4-carboxamide) and fumarate, and of adenylosuccinate (ADS or N(6)-(1,2-dicarboxyethyl)-AMP) to adenosine monophosphate (AMP) and fumarate. This is Adenylosuccinate lyase (purB) from Staphylococcus epidermidis (strain ATCC 35984 / DSM 28319 / BCRC 17069 / CCUG 31568 / BM 3577 / RP62A).